The sequence spans 375 residues: Protein arginine N-methyltransferase 6 (375 aa).

Positions 1 to 36 are disordered; that stretch reads MSQPKRRKLESGGGGEGGEGTEEEDGGELEVAVPRP. Acidic residues predominate over residues 19–28; that stretch reads EGTEEEDGGE. A Phosphothreonine modification is found at threonine 21. Position 38 is an asymmetric dimethylarginine; by autocatalysis (arginine 38). The 331-residue stretch at 44-374 folds into the SAM-dependent MTase PRMT-type domain; it reads DQLYYQCYSD…EEKTKDFAME (331 aa). S-adenosyl-L-methionine contacts are provided by histidine 57, arginine 66, glycine 90, glutamate 112, and glutamate 141. Residues glutamate 155 and glutamate 164 contribute to the active site.

Belongs to the class I-like SAM-binding methyltransferase superfamily. Protein arginine N-methyltransferase family. PRMT6 subfamily. In terms of assembly, interacts with (and methylates) HIV-1 Tat, Rev and Nucleocapsid protein p7 (NC). Interacts with EPB41L3 and NCOA1. Automethylation enhances its stability.

It is found in the nucleus. The catalysed reaction is L-arginyl-[protein] + 2 S-adenosyl-L-methionine = N(omega),N(omega)-dimethyl-L-arginyl-[protein] + 2 S-adenosyl-L-homocysteine + 2 H(+). Arginine methyltransferase that can catalyze the formation of both omega-N monomethylarginine (MMA) and asymmetrical dimethylarginine (aDMA), with a strong preference for the formation of aDMA. Preferentially methylates arginyl residues present in a glycine and arginine-rich domain and displays preference for monomethylated substrates. Specifically mediates the asymmetric dimethylation of histone H3 'Arg-2' to form H3R2me2a. H3R2me2a represents a specific tag for epigenetic transcriptional repression and is mutually exclusive with methylation on histone H3 'Lys-4' (H3K4me2 and H3K4me3). Acts as a transcriptional repressor of various genes such as HOXA2, THBS1 and TP53. Repression of TP53 blocks cellular senescence. Also methylates histone H2A and H4 'Arg-3' (H2AR3me and H4R3me, respectively). Acts as a regulator of DNA base excision during DNA repair by mediating the methylation of DNA polymerase beta (POLB), leading to the stimulation of its polymerase activity by enhancing DNA binding and processivity. Methylates HMGA1. Regulates alternative splicing events. Acts as a transcriptional coactivator of a number of steroid hormone receptors including ESR1, ESR2, PGR and NR3C1. Promotes fasting-induced transcriptional activation of the gluconeogenic program through methylation of the CRTC2 transcription coactivator. Methylates GPS2, protecting GPS2 from ubiquitination and degradation. Methylates SIRT7, inhibiting SIRT7 histone deacetylase activity and promoting mitochondria biogenesis. This Bos taurus (Bovine) protein is Protein arginine N-methyltransferase 6 (PRMT6).